Consider the following 287-residue polypeptide: Shikimate dehydrogenase (NADP(+)) (287 aa).

Shikimate-binding positions include 20 to 22 (SRS) and Thr-67. The active-site Proton acceptor is Lys-71. Glu-84 contacts NADP(+). Residues Asn-93 and Asp-108 each contribute to the shikimate site. Residues 132–136 (GAGGA), 156–161 (NRTAAR), and Met-226 contribute to the NADP(+) site. Tyr-228 contacts shikimate. Gly-250 is a binding site for NADP(+).

The protein belongs to the shikimate dehydrogenase family. In terms of assembly, homodimer.

The enzyme catalyses shikimate + NADP(+) = 3-dehydroshikimate + NADPH + H(+). The protein operates within metabolic intermediate biosynthesis; chorismate biosynthesis; chorismate from D-erythrose 4-phosphate and phosphoenolpyruvate: step 4/7. Functionally, involved in the biosynthesis of the chorismate, which leads to the biosynthesis of aromatic amino acids. Catalyzes the reversible NADPH linked reduction of 3-dehydroshikimate (DHSA) to yield shikimate (SA). The polypeptide is Shikimate dehydrogenase (NADP(+)) (Bordetella parapertussis (strain 12822 / ATCC BAA-587 / NCTC 13253)).